A 239-amino-acid chain; its full sequence is Proteasome activator complex subunit 2 (239 aa).

N-acetylalanine is present on Ala2. Phosphoserine is present on Ser10. The interval 65–87 (DIPIPDPPPKDDEMETDKQEKKE) is disordered. The span at 72–87 (PPKDDEMETDKQEKKE) shows a compositional bias: basic and acidic residues.

Belongs to the PA28 family. Heterodimer of PSME1 and PSME2, which forms a hexameric ring.

Implicated in immunoproteasome assembly and required for efficient antigen processing. The PA28 activator complex enhances the generation of class I binding peptides by altering the cleavage pattern of the proteasome. The chain is Proteasome activator complex subunit 2 (Psme2) from Mus musculus (Mouse).